The following is an 814-amino-acid chain: Cadherin-15 (814 aa).

The N-terminal stretch at 1-21 (MDAAFLLVLGLLAQSLCLSLG) is a signal peptide. The propeptide occupies 22 to 60 (VPGWRRPTTLYPWRRAPALSRVRRAWVIPPISVSENHKR). 5 consecutive Cadherin domains span residues 61–152 (LPYP…RPAF), 153–260 (LQEA…APEF), 261–375 (TRDE…PPVF), 376–481 (QENP…DHAP), and 482–590 (VLAP…VCLP). The Extracellular portion of the chain corresponds to 61-606 (LPYPLVQIKS…AGGTGLSLGA (546 aa)). N227 carries an N-linked (GlcNAc...) asparagine glycan. Residues N531, N538, and N576 are each glycosylated (N-linked (GlcNAc...) asparagine). The helical transmembrane segment at 607-626 (LVIVLASALLLLVLVLLVAL) threads the bilayer. Residues 627 to 814 (RARFWKQSRG…LLPRHRGRTA (188 aa)) lie on the Cytoplasmic side of the membrane. 2 disordered regions span residues 636–663 (GKGL…GEED) and 676–703 (TALS…PPRV).

Expressed in the brain and cerebellum.

It is found in the cell membrane. Cadherins are calcium-dependent cell adhesion proteins. They preferentially interact with themselves in a homophilic manner in connecting cells; cadherins may thus contribute to the sorting of heterogeneous cell types. M-cadherin is part of the myogenic program and may provide a trigger for terminal muscle differentiation. This Homo sapiens (Human) protein is Cadherin-15 (CDH15).